The primary structure comprises 307 residues: Acetyl-coenzyme A carboxylase carboxyl transferase subunit beta (307 aa).

A disordered region spans residues 1–26; the sequence is MAMAEPQDPKKGDKKTAERRGGGWLS. The segment covering 7–21 has biased composition (basic and acidic residues); the sequence is QDPKKGDKKTAERRG. Positions 45–307 constitute a CoA carboxyltransferase N-terminal domain; sequence LWVKCPDTGE…LMMGRKRQAA (263 aa).

The protein belongs to the AccD/PCCB family. In terms of assembly, acetyl-CoA carboxylase is a heterohexamer composed of biotin carboxyl carrier protein (AccB), biotin carboxylase (AccC) and two subunits each of ACCase subunit alpha (AccA) and ACCase subunit beta (AccD).

The protein localises to the cytoplasm. It catalyses the reaction N(6)-carboxybiotinyl-L-lysyl-[protein] + acetyl-CoA = N(6)-biotinyl-L-lysyl-[protein] + malonyl-CoA. Its pathway is lipid metabolism; malonyl-CoA biosynthesis; malonyl-CoA from acetyl-CoA: step 1/1. In terms of biological role, component of the acetyl coenzyme A carboxylase (ACC) complex. Biotin carboxylase (BC) catalyzes the carboxylation of biotin on its carrier protein (BCCP) and then the CO(2) group is transferred by the transcarboxylase to acetyl-CoA to form malonyl-CoA. The protein is Acetyl-coenzyme A carboxylase carboxyl transferase subunit beta of Caulobacter vibrioides (strain ATCC 19089 / CIP 103742 / CB 15) (Caulobacter crescentus).